The chain runs to 24 residues: RuBisCO large subunit-binding protein subunit beta, chloroplastic (24 aa).

Belongs to the chaperonin (HSP60) family. Oligomer of probably six alpha and six beta subunits.

The protein localises to the plastid. The protein resides in the chloroplast. Its function is as follows. This protein binds RuBisCO small and large subunits and is implicated in the assembly of the enzyme oligomer. The protein is RuBisCO large subunit-binding protein subunit beta, chloroplastic of Populus euphratica (Euphrates poplar).